We begin with the raw amino-acid sequence, 142 residues long: Hydrogenase maturation factor HypA (142 aa).

H2 lines the Ni(2+) pocket. Residues C73, C76, C109, and C112 each coordinate Zn(2+).

Belongs to the HypA/HybF family.

Its function is as follows. Involved in the maturation of [NiFe] hydrogenases. Required for nickel insertion into the metal center of the hydrogenase. The chain is Hydrogenase maturation factor HypA from Methanopyrus kandleri (strain AV19 / DSM 6324 / JCM 9639 / NBRC 100938).